A 642-amino-acid chain; its full sequence is tRNA uridine 5-carboxymethylaminomethyl modification enzyme MnmG (642 aa).

Residues 10–15 (GAGHAG), Val122, and Ser177 each bind FAD. 269–283 (SARYCPSLEDKVMRF) is a binding site for NAD(+). Gln366 contacts FAD.

It belongs to the MnmG family. Homodimer. Heterotetramer of two MnmE and two MnmG subunits. Requires FAD as cofactor.

Its subcellular location is the cytoplasm. NAD-binding protein involved in the addition of a carboxymethylaminomethyl (cmnm) group at the wobble position (U34) of certain tRNAs, forming tRNA-cmnm(5)s(2)U34. The chain is tRNA uridine 5-carboxymethylaminomethyl modification enzyme MnmG from Syntrophobacter fumaroxidans (strain DSM 10017 / MPOB).